Here is a 1567-residue protein sequence, read N- to C-terminus: Putative DEAH-box ATP-dependent helicase UM11114 (1567 aa).

Disordered stretches follow at residues 1 to 95 (MAPR…PGSK) and 670 to 734 (ESSV…ETRR). Residues 10-20 (IKSSGTTSSKA) are compositionally biased toward polar residues. Composition is skewed to low complexity over residues 39–48 (TKAAKQQQTQ) and 55–73 (AISA…AASS). Positions 74-83 (AGGGGGGGQG) are enriched in gly residues. 2 stretches are compositionally biased toward polar residues: residues 670-687 (ESSV…TPTG) and 713-726 (LQRQ…SPSY). One can recognise a Helicase ATP-binding domain in the interval 746 to 924 (LGLIRSNRVV…FGKAPCISIP (179 aa)). 759 to 766 (GETGCGKT) contacts ATP. The DEAH box motif lies at 871-874 (DEVH). One can recognise a Helicase C-terminal domain in the interval 1003–1184 (VVRYVVERAE…SLFLEVKSMR (182 aa)).

The protein belongs to the DEAD box helicase family. DEAH subfamily.

This chain is Putative DEAH-box ATP-dependent helicase UM11114, found in Mycosarcoma maydis (Corn smut fungus).